A 261-amino-acid polypeptide reads, in one-letter code: Glucose 1-dehydrogenase 3 (261 aa).

An NAD(+)-binding site is contributed by 11-35 (VITGGSTGLGRAMAVRFGQEEAKVV). Ser145 is a binding site for substrate. Tyr158 (proton acceptor) is an active-site residue.

Belongs to the short-chain dehydrogenases/reductases (SDR) family. As to quaternary structure, homotetramer.

It catalyses the reaction D-glucose + NAD(+) = D-glucono-1,5-lactone + NADH + H(+). It carries out the reaction D-glucose + NADP(+) = D-glucono-1,5-lactone + NADPH + H(+). The protein is Glucose 1-dehydrogenase 3 (gdhIII) of Priestia megaterium (Bacillus megaterium).